The following is a 318-amino-acid chain: NADH-ubiquinone oxidoreductase chain 1 (318 aa).

Helical transmembrane passes span 2-22 (FMLNLLTMIVPVLLAVAFLTL), 68-88 (ITMFIMAPILALTLALTMWIP), 100-120 (LGVLFMLAMSSLAVYALLWSG), 147-167 (AIILLSTLLMSGSYSLSTLII), 171-191 (YIWLILPSWPLTMMWFISTLA), 217-237 (GGPFALFFLAEYANIIMMNAL), 254-273 (LYTTNFAMKTLLLTMSFLWI), and 294-314 (LPLTLALCMWYVTMPIMMAGI).

The protein belongs to the complex I subunit 1 family.

It localises to the mitochondrion inner membrane. The enzyme catalyses a ubiquinone + NADH + 5 H(+)(in) = a ubiquinol + NAD(+) + 4 H(+)(out). Functionally, core subunit of the mitochondrial membrane respiratory chain NADH dehydrogenase (Complex I) that is believed to belong to the minimal assembly required for catalysis. Complex I functions in the transfer of electrons from NADH to the respiratory chain. The immediate electron acceptor for the enzyme is believed to be ubiquinone. The chain is NADH-ubiquinone oxidoreductase chain 1 (MT-ND1) from Hsunycteris thomasi (Thomas's nectar bat).